Consider the following 340-residue polypeptide: Uroporphyrinogen decarboxylase (340 aa).

Residues 23–27 (RQAGR), Asp72, Tyr147, Thr202, and His316 each bind substrate.

This sequence belongs to the uroporphyrinogen decarboxylase family. As to quaternary structure, homodimer.

It is found in the cytoplasm. The enzyme catalyses uroporphyrinogen III + 4 H(+) = coproporphyrinogen III + 4 CO2. It participates in porphyrin-containing compound metabolism; protoporphyrin-IX biosynthesis; coproporphyrinogen-III from 5-aminolevulinate: step 4/4. Functionally, catalyzes the decarboxylation of four acetate groups of uroporphyrinogen-III to yield coproporphyrinogen-III. This chain is Uroporphyrinogen decarboxylase, found in Pelobacter propionicus (strain DSM 2379 / NBRC 103807 / OttBd1).